The primary structure comprises 251 residues: RNA polymerase sigma factor SigI (251 aa).

The Polymerase core binding motif lies at 61 to 74 (DEFSIGLIAFNEAI). A DNA-binding region (H-T-H motif) is located at residues 206-225 (VKQLEQLVSVSRKTIERNRK).

Belongs to the sigma-70 factor family. SigI subfamily. Interacts with RsgI.

The protein localises to the cytoplasm. With respect to regulation, negatively regulated by the anti-sigma-I factor RsgI. Upon exposure to heat, SigI is released from RsgI and activated. Transient heat activation of SigI may depend upon DnaK chaperone. Functionally, sigma factors are initiation factors that promote the attachment of RNA polymerase to specific initiation sites and are then released. This sigma factor is involved in regulation of cell wall metabolism in response to heat stress. Acts by regulating the expression of genes such as bcrC, mreBH and lytE. Also plays a role in survival at low temperatures. This chain is RNA polymerase sigma factor SigI, found in Bacillus subtilis (strain 168).